A 251-amino-acid chain; its full sequence is tRNA (guanine-N(7)-)-methyltransferase (251 aa).

The segment at 1-29 (MTQTLSSQDPQAPAAPPMPGAAGSAPADV) is disordered. S-adenosyl-L-methionine contacts are provided by Glu84, Glu109, Asp136, and Asp159. Asp159 is an active-site residue. Lys163 contributes to the substrate binding site. The interval 165-170 (RHNKRR) is interaction with RNA. Substrate contacts are provided by residues Asp195 and 230–233 (TKFE).

Belongs to the class I-like SAM-binding methyltransferase superfamily. TrmB family.

It carries out the reaction guanosine(46) in tRNA + S-adenosyl-L-methionine = N(7)-methylguanosine(46) in tRNA + S-adenosyl-L-homocysteine. The protein operates within tRNA modification; N(7)-methylguanine-tRNA biosynthesis. Functionally, catalyzes the formation of N(7)-methylguanine at position 46 (m7G46) in tRNA. In Acidovorax sp. (strain JS42), this protein is tRNA (guanine-N(7)-)-methyltransferase.